Here is a 291-residue protein sequence, read N- to C-terminus: Nucleotide-binding protein lwe2422 (291 aa).

13–20 (GMSGAGKT) is an ATP binding site. Residue 63–66 (DLRG) coordinates GTP.

It belongs to the RapZ-like family.

In terms of biological role, displays ATPase and GTPase activities. This is Nucleotide-binding protein lwe2422 from Listeria welshimeri serovar 6b (strain ATCC 35897 / DSM 20650 / CCUG 15529 / CIP 8149 / NCTC 11857 / SLCC 5334 / V8).